The primary structure comprises 438 residues: Xaa-Pro dipeptidase 2 (438 aa).

5 residues coordinate Mn(2+): aspartate 242, aspartate 253, histidine 333, glutamate 378, and glutamate 414.

It belongs to the peptidase M24B family. Bacterial-type prolidase subfamily. Mn(2+) serves as cofactor.

It catalyses the reaction Xaa-L-Pro dipeptide + H2O = an L-alpha-amino acid + L-proline. Splits dipeptides with a prolyl residue in the C-terminal position. The chain is Xaa-Pro dipeptidase 2 from Idiomarina loihiensis (strain ATCC BAA-735 / DSM 15497 / L2-TR).